The sequence spans 92 residues: Serine rich endogenous peptide 11 (92 aa).

The signal sequence occupies residues 1-29 (MENNTFSSKSINLLILLLLLCTFLCQTES). The disordered stretch occupies residues 50–92 (PNTDIGTPSSTSDRGGGGNGRRLMSQMDVGASSSGQGGGRNRH). The segment covering 53-62 (DIGTPSSTSD) has biased composition (polar residues). 2 short sequence motifs (SCOOP motif) span residues 53–67 (DIGT…GGGG) and 75–89 (QMDV…GGGR). 2 short sequence motifs (sxS motif essential for MIK2 binding) span residues 59-61 (STS) and 81-83 (SSS).

It belongs to the serine rich endogenous peptide (SCOOP) phytocytokine family. In terms of assembly, interacts with MIK2 (via extracellular leucine-rich repeat domain); this interaction triggers the formation of complex between MIK2 and the BAK1/SERK3 and SERK4 coreceptors, and subsequent BAK1 activation by phosphorylation. In terms of tissue distribution, mostly expressed in seedlings shoots and roots, and, to a lower extent, in leaves.

The protein localises to the cell membrane. It is found in the secreted. It localises to the extracellular space. The protein resides in the apoplast. Functionally, brassicaceae-specific phytocytokine (plant endogenous peptide released into the apoplast) perceived by MIK2 in a BAK1/SERK3 and SERK4 coreceptors-dependent manner, that modulates various physiological and antimicrobial processes including growth prevention and reactive oxygen species (ROS) response regulation. This Arabidopsis thaliana (Mouse-ear cress) protein is Serine rich endogenous peptide 11.